The following is a 150-amino-acid chain: Cytochrome c oxidase subunit 5A, mitochondrial (150 aa).

A mitochondrion-targeting transit peptide spans 1-41 (MLGAALRRCAVAATTRAGPRGLLHSARTPGPAAAIQSVRCY). Positions 2-17 (LGAALRRCAVAATTRA) match the SIFI-degron motif. Lys-87 and Lys-113 each carry N6-acetyllysine. Residue Thr-141 is modified to Phosphothreonine.

Belongs to the cytochrome c oxidase subunit 5A family. Component of the cytochrome c oxidase (complex IV, CIV), a multisubunit enzyme composed of 14 subunits. The complex is composed of a catalytic core of 3 subunits MT-CO1, MT-CO2 and MT-CO3, encoded in the mitochondrial DNA, and 11 supernumerary subunits COX4I, COX5A, COX5B, COX6A, COX6B, COX6C, COX7A, COX7B, COX7C, COX8 and NDUFA4, which are encoded in the nuclear genome. The complex exists as a monomer or a dimer and forms supercomplexes (SCs) in the inner mitochondrial membrane with NADH-ubiquinone oxidoreductase (complex I, CI) and ubiquinol-cytochrome c oxidoreductase (cytochrome b-c1 complex, complex III, CIII), resulting in different assemblies (supercomplex SCI(1)III(2)IV(1) and megacomplex MCI(2)III(2)IV(2)). Interacts with AFG1L. Interacts with RAB5IF. In terms of processing, in response to mitochondrial stress, the precursor protein is ubiquitinated by the SIFI complex in the cytoplasm before mitochondrial import, leading to its degradation. Within the SIFI complex, UBR4 initiates ubiquitin chain that are further elongated or branched by KCMF1.

Its subcellular location is the mitochondrion inner membrane. Its pathway is energy metabolism; oxidative phosphorylation. Component of the cytochrome c oxidase, the last enzyme in the mitochondrial electron transport chain which drives oxidative phosphorylation. The respiratory chain contains 3 multisubunit complexes succinate dehydrogenase (complex II, CII), ubiquinol-cytochrome c oxidoreductase (cytochrome b-c1 complex, complex III, CIII) and cytochrome c oxidase (complex IV, CIV), that cooperate to transfer electrons derived from NADH and succinate to molecular oxygen, creating an electrochemical gradient over the inner membrane that drives transmembrane transport and the ATP synthase. Cytochrome c oxidase is the component of the respiratory chain that catalyzes the reduction of oxygen to water. Electrons originating from reduced cytochrome c in the intermembrane space (IMS) are transferred via the dinuclear copper A center (CU(A)) of subunit 2 and heme A of subunit 1 to the active site in subunit 1, a binuclear center (BNC) formed by heme A3 and copper B (CU(B)). The BNC reduces molecular oxygen to 2 water molecules using 4 electrons from cytochrome c in the IMS and 4 protons from the mitochondrial matrix. The polypeptide is Cytochrome c oxidase subunit 5A, mitochondrial (COX5A) (Pan troglodytes (Chimpanzee)).